Consider the following 520-residue polypeptide: Polyprenol-phosphate-mannose--protein mannosyltransferase (520 aa).

Helical transmembrane passes span 38 to 58 (WAII…SATA), 119 to 139 (LGWR…IMAI), 145 to 165 (GSTM…VLLV), 168 to 188 (RFGM…WALI), 237 to 257 (WSGL…DLWL), 274 to 294 (DVIP…IWSW), 388 to 408 (IYLF…LWAL), 418 to 438 (GYVV…AAYD), 441 to 461 (MYFF…ALAC), and 485 to 505 (YISL…GFVI).

This sequence belongs to the glycosyltransferase 39 family.

It is found in the cell membrane. The protein operates within protein modification; protein glycosylation. Its function is as follows. Protein O-mannosyltransferase that catalyzes the transfer of a single mannose residue from a polyprenol phospho-mannosyl lipidic donor to the hydroxyl group of selected serine and threonine residues in acceptor proteins. The sequence is that of Polyprenol-phosphate-mannose--protein mannosyltransferase (pmt) from Corynebacterium glutamicum (strain ATCC 13032 / DSM 20300 / JCM 1318 / BCRC 11384 / CCUG 27702 / LMG 3730 / NBRC 12168 / NCIMB 10025 / NRRL B-2784 / 534).